A 138-amino-acid polypeptide reads, in one-letter code: Basic phospholipase A2 PL-X' (138 aa).

The first 16 residues, 1-16 (MRTLWIMAVLLVGVEG), serve as a signal peptide directing secretion. Cystine bridges form between C42/C131, C44/C60, C59/C111, C65/C138, C66/C104, C73/C97, and C91/C102. 3 residues coordinate Ca(2+): Y43, G45, and G47. H63 is an active-site residue. D64 is a Ca(2+) binding site. Residue D105 is part of the active site.

It belongs to the phospholipase A2 family. Group II subfamily. D49 sub-subfamily. Requires Ca(2+) as cofactor. As to expression, expressed by the venom gland.

Its subcellular location is the secreted. The enzyme catalyses a 1,2-diacyl-sn-glycero-3-phosphocholine + H2O = a 1-acyl-sn-glycero-3-phosphocholine + a fatty acid + H(+). Functionally, PLA2 catalyzes the calcium-dependent hydrolysis of the 2-acyl groups in 3-sn-phosphoglycerides. This Protobothrops flavoviridis (Habu) protein is Basic phospholipase A2 PL-X'.